We begin with the raw amino-acid sequence, 129 residues long: Glycine cleavage system H protein (129 aa).

One can recognise a Lipoyl-binding domain in the interval 24–106 (LVRIGISAFA…HGEGWLLLVK (83 aa)). Residue Lys65 is modified to N6-lipoyllysine.

The protein belongs to the GcvH family. In terms of assembly, the glycine cleavage system is composed of four proteins: P, T, L and H. Requires (R)-lipoate as cofactor.

The glycine cleavage system catalyzes the degradation of glycine. The H protein shuttles the methylamine group of glycine from the P protein to the T protein. The protein is Glycine cleavage system H protein of Prochlorococcus marinus (strain SARG / CCMP1375 / SS120).